Reading from the N-terminus, the 1254-residue chain is Zinc finger protein BRUTUS-like At1g18910 (1254 aa).

Positions 1-30 (MGVGDPLPLPPEKNRREVNKPPDIASTSSS) are disordered. A helical transmembrane segment spans residues 454 to 474 (IHFLPLGLLKCVIMWFSAQLP). A CHY-type zinc finger spans residues 1013–1082 (PHKLIFGCKH…ASCSNISCSS (70 aa)). Cys-1020, His-1022, Cys-1033, Cys-1034, Cys-1040, Cys-1043, His-1044, His-1050, Cys-1062, Cys-1065, Cys-1075, Cys-1080, Cys-1089, Cys-1092, His-1103, Cys-1104, Cys-1107, Cys-1110, His-1122, Cys-1123, Cys-1126, Cys-1129, His-1137, and Cys-1139 together coordinate Zn(2+). A CTCHY-type zinc finger spans residues 1084–1147 (MGKYYCKICK…VCREKCLEDN (64 aa)). Residues 1148 to 1190 (CPICHEYIFTSNSPVKALPCGHVMHSTCFQEYTCSHYTCPICS) form an RING-type; atypical zinc finger.

In terms of assembly, binds zinc and iron ions.

Its subcellular location is the membrane. The protein resides in the nucleus. It participates in protein modification; protein ubiquitination. In terms of biological role, probable E3 ubiquitin-protein ligase that may regulate the response to iron deficiency and thus contributes to iron homeostasis. This chain is Zinc finger protein BRUTUS-like At1g18910, found in Arabidopsis thaliana (Mouse-ear cress).